Consider the following 371-residue polypeptide: 4-hydroxybenzoate polyprenyltransferase, mitochondrial (371 aa).

A mitochondrion-targeting transit peptide spans 1 to 34 (MLGSRAAGFARGLRAVALAWLPGWRGRSFALARA). Residues 35 to 83 (AGAPHGGDLQPPACPEPRGRQLSLSAAAVVDSAPRPLQPYLRLMRLDKP) are Mitochondrial matrix-facing. A helical transmembrane segment spans residues 84–104 (IGTWLLYLPCTWSIGLAAEPG). At 105-108 (CFPD) the chain is on the mitochondrial intermembrane side. A helical transmembrane segment spans residues 109 to 129 (WYMLSLFGTGAILMRGAGCTI). The Mitochondrial matrix portion of the chain corresponds to 130-148 (NDMWDQDYDKKVTRTANRP). The helical transmembrane segment at 149–169 (IAAGDISTFQSFVFLGGQLTL) threads the bilayer. The Mitochondrial intermembrane portion of the chain corresponds to 170–172 (ALG). A helical membrane pass occupies residues 173–193 (VLLCLNYYSIALGAGSLLLVI). The Mitochondrial matrix segment spans residues 194–203 (TYPLMKRISY). The helical transmembrane segment at 204–224 (WPQLALGLTFNWGALLGWSAI) threads the bilayer. Residues 225–231 (KGSCDPS) lie on the Mitochondrial intermembrane side of the membrane. The chain crosses the membrane as a helical span at residues 232–252 (VCLPLYFSGVMWTLIYDTIYA). Residues 253–277 (HQDKRDDVLIGLKSTALRFGENTKP) lie on the Mitochondrial matrix side of the membrane. Residues 278–298 (WLSGFSVAMLGALSLVGVNSG) traverse the membrane as a helical segment. The Mitochondrial intermembrane segment spans residues 299–300 (QT). The chain crosses the membrane as a helical span at residues 301–321 (APYYAALGAVGAHLTHQIYTL). Residues 322-332 (DIHRPEDCWNK) are Mitochondrial matrix-facing. Residues 333 to 353 (FISNRTLGLIVFLGIVLGNLW) traverse the membrane as a helical segment. Residues 354-371 (KEKKTDKTKKGIENKIEN) are Mitochondrial intermembrane-facing.

The protein belongs to the UbiA prenyltransferase family. Mg(2+) serves as cofactor. In terms of tissue distribution, widely expressed. Present in all of the tissues tested. Expressed at higher level in skeletal muscle, adrenal glands and the heart.

Its subcellular location is the mitochondrion inner membrane. The catalysed reaction is an all-trans-polyprenyl diphosphate + 4-hydroxybenzoate = a 4-hydroxy-3-(all-trans-polyprenyl)benzoate + diphosphate. The enzyme catalyses all-trans-decaprenyl diphosphate + 4-hydroxybenzoate = 4-hydroxy-3-(all-trans-decaprenyl)benzoate + diphosphate. It carries out the reaction all-trans-nonaprenyl diphosphate + 4-hydroxybenzoate = 4-hydroxy-3-(all-trans-nonaprenyl)benzoate + diphosphate. Its pathway is cofactor biosynthesis; ubiquinone biosynthesis. In terms of biological role, mediates the second step in the final reaction sequence of coenzyme Q (CoQ) biosynthesis. Catalyzes the prenylation of para-hydroxybenzoate (PHB) with an all-trans polyprenyl donor (such as all-trans-decaprenyl diphosphate). The length of the polyprenyl side chain varies depending on the species, in humans, the side chain is comprised of 10 isoprenyls (decaprenyl) producing CoQ10 (also known as ubiquinone), whereas rodents predominantly generate CoQ9. However, this specificity is not complete, human tissues have low amounts of CoQ9 and rodent organs contain some CoQ10. Plays a central role in the biosynthesis of CoQ10. CoQ10 is a vital molecule that transports electrons from mitochondrial respiratory chain complexes. CoQs also function as cofactors for uncoupling protein and play a role as regulators of the extracellularly-induced ceramide-dependent apoptotic pathway. Regulates mitochondrial permeability transition pore (mPTP) opening and ROS production (pivotal events in cell death) in a tissue specific manner. This chain is 4-hydroxybenzoate polyprenyltransferase, mitochondrial, found in Homo sapiens (Human).